A 331-amino-acid polypeptide reads, in one-letter code: Fructose-1,6-bisphosphatase class 1 2 (331 aa).

4 residues coordinate Mg(2+): E80, D98, L100, and D101. Residues 101 to 104 (DGSS) and N189 each bind substrate. Position 261 (E261) interacts with Mg(2+).

This sequence belongs to the FBPase class 1 family. Homotetramer. The cofactor is Mg(2+).

It is found in the cytoplasm. It catalyses the reaction beta-D-fructose 1,6-bisphosphate + H2O = beta-D-fructose 6-phosphate + phosphate. The protein operates within carbohydrate biosynthesis; Calvin cycle. This Cereibacter sphaeroides (strain ATCC 17023 / DSM 158 / JCM 6121 / CCUG 31486 / LMG 2827 / NBRC 12203 / NCIMB 8253 / ATH 2.4.1.) (Rhodobacter sphaeroides) protein is Fructose-1,6-bisphosphatase class 1 2.